The following is a 164-amino-acid chain: SsrA-binding protein (164 aa).

It belongs to the SmpB family.

The protein localises to the cytoplasm. Functionally, required for rescue of stalled ribosomes mediated by trans-translation. Binds to transfer-messenger RNA (tmRNA), required for stable association of tmRNA with ribosomes. tmRNA and SmpB together mimic tRNA shape, replacing the anticodon stem-loop with SmpB. tmRNA is encoded by the ssrA gene; the 2 termini fold to resemble tRNA(Ala) and it encodes a 'tag peptide', a short internal open reading frame. During trans-translation Ala-aminoacylated tmRNA acts like a tRNA, entering the A-site of stalled ribosomes, displacing the stalled mRNA. The ribosome then switches to translate the ORF on the tmRNA; the nascent peptide is terminated with the 'tag peptide' encoded by the tmRNA and targeted for degradation. The ribosome is freed to recommence translation, which seems to be the essential function of trans-translation. This chain is SsrA-binding protein, found in Synechococcus sp. (strain CC9311).